The following is a 61-amino-acid chain: Metallothionein-1H (61 aa).

Residue Met-1 is modified to N-acetylmethionine. A beta region spans residues 1-29 (MDPNCSCEAGGSCACAGSCKCKKCKCTSC). A divalent metal cation-binding residues include Cys-5, Cys-7, Cys-13, Cys-15, Cys-19, Cys-21, Cys-24, Cys-26, Cys-29, Cys-33, Cys-34, Cys-36, Cys-37, Cys-41, Cys-44, Cys-48, Cys-50, and Cys-57. The tract at residues 30-61 (KKSCCSCCPLGCAKCAQGCICKGASEKCSCCA) is alpha. At Ser-58 the chain carries Phosphoserine. Residues Cys-59 and Cys-60 each contribute to the a divalent metal cation site.

The protein belongs to the metallothionein superfamily. Type 1 family. In terms of assembly, monomer.

Functionally, metallothioneins have a high content of cysteine residues that bind various heavy metals; these proteins are transcriptionally regulated by both heavy metals and glucocorticoids. This Homo sapiens (Human) protein is Metallothionein-1H (MT1H).